A 442-amino-acid polypeptide reads, in one-letter code: tRNA modification GTPase MnmE (442 aa).

Positions 27, 84, and 124 each coordinate (6S)-5-formyl-5,6,7,8-tetrahydrofolate. The TrmE-type G domain maps to glycine 221–glutamate 366. GTP is bound by residues asparagine 231–serine 236, serine 250–threonine 256, and aspartate 275–glycine 278. Serine 235 and threonine 256 together coordinate Mg(2+). Lysine 442 provides a ligand contact to (6S)-5-formyl-5,6,7,8-tetrahydrofolate.

Belongs to the TRAFAC class TrmE-Era-EngA-EngB-Septin-like GTPase superfamily. TrmE GTPase family. As to quaternary structure, homodimer. Heterotetramer of two MnmE and two MnmG subunits. Requires K(+) as cofactor.

Its subcellular location is the cytoplasm. Exhibits a very high intrinsic GTPase hydrolysis rate. Involved in the addition of a carboxymethylaminomethyl (cmnm) group at the wobble position (U34) of certain tRNAs, forming tRNA-cmnm(5)s(2)U34. The sequence is that of tRNA modification GTPase MnmE from Brucella anthropi (strain ATCC 49188 / DSM 6882 / CCUG 24695 / JCM 21032 / LMG 3331 / NBRC 15819 / NCTC 12168 / Alc 37) (Ochrobactrum anthropi).